Consider the following 474-residue polypeptide: UDP-N-acetylmuramate--L-alanine ligase (474 aa).

123 to 129 lines the ATP pocket; the sequence is GTHGKTT.

It belongs to the MurCDEF family.

Its subcellular location is the cytoplasm. The enzyme catalyses UDP-N-acetyl-alpha-D-muramate + L-alanine + ATP = UDP-N-acetyl-alpha-D-muramoyl-L-alanine + ADP + phosphate + H(+). Its pathway is cell wall biogenesis; peptidoglycan biosynthesis. Its function is as follows. Cell wall formation. This chain is UDP-N-acetylmuramate--L-alanine ligase, found in Alcanivorax borkumensis (strain ATCC 700651 / DSM 11573 / NCIMB 13689 / SK2).